Reading from the N-terminus, the 941-residue chain is Lysine-specific demethylase 7A (941 aa).

The PHD-type zinc-finger motif lies at 37 to 88; sequence PVYCVCRQPYDVNRFMIECDICKDWFHGSCVGVEEHHAVDIDLYHCPNCAVL. Positions 97–114 are linker; the sequence is RRNWHRHDYTEIDDGSKP. Residues 230-386 form the JmjC domain; it reads FSDTKMSELV…MQLRCYEMEK (157 aa). Position 279 (threonine 279) interacts with substrate. The Fe cation site is built by histidine 282 and aspartate 284. Substrate is bound at residue lysine 299. Residue histidine 354 participates in Fe cation binding. Disordered regions lie at residues 597 to 633, 677 to 700, and 819 to 921; these read QSLY…EHEE, TTEE…KEES, and QDLS…MATA. The residue at position 604 (serine 604) is a Phosphoserine. Composition is skewed to basic and acidic residues over residues 618–633 and 685–700; these read MKIE…EHEE and GDEK…KEES. Polar residues predominate over residues 834-876; the sequence is SEISQRVQSRNYVDSSGSSLQNGKYMQNSNLTSGACQISNGSL.

This sequence belongs to the JHDM1 histone demethylase family. JHDM1D subfamily. Requires Fe(2+) as cofactor.

The protein localises to the nucleus. The catalysed reaction is N(6),N(6)-dimethyl-L-lysyl(9)-[histone H3] + 2 2-oxoglutarate + 2 O2 = L-lysyl(9)-[histone H3] + 2 formaldehyde + 2 succinate + 2 CO2. It catalyses the reaction N(6),N(6)-dimethyl-L-lysyl(27)-[histone H3] + 2 2-oxoglutarate + 2 O2 = L-lysyl(27)-[histone H3] + 2 formaldehyde + 2 succinate + 2 CO2. The enzyme catalyses N(6),N(6)-dimethyl-L-lysyl(36)-[histone H3] + 2-oxoglutarate + O2 = N(6)-methyl-L-lysyl(36)-[histone H3] + formaldehyde + succinate + CO2. It carries out the reaction N(6)-methyl-L-lysyl(20)-[histone H4] + 2-oxoglutarate + O2 = L-lysyl(20)-[histone H4] + formaldehyde + succinate + CO2. Its function is as follows. Histone demethylase required for brain development. Specifically demethylates dimethylated 'Lys-9', 'Lys-27' and 'Lys-36' (H3K9me2, H3K27me2, H3K36me2, respectively) of histone H3 and monomethylated histone H4 'Lys-20' residue (H4K20Me1), thereby playing a central role in histone code. Specifically binds trimethylated 'Lys-4' of histone H3 (H3K4me3), affecting histone demethylase specificity: in presence of H3K4me3, it has no demethylase activity toward H3K9me2, while it has high activity toward H3K27me2. Demethylates H3K9me2 in absence of H3K4me3. Has activity toward H4K20Me1 only when nucleosome is used as a substrate and when not histone octamer is used as substrate. This Homo sapiens (Human) protein is Lysine-specific demethylase 7A (KDM7A).